A 525-amino-acid chain; its full sequence is PE-PGRS family protein PE_PGRS47 (525 aa).

The 93-residue stretch at M1 to A93 folds into the PE domain. Positions V506–S525 are disordered. Low complexity predominate over residues E514–S525.

The protein belongs to the mycobacterial PE family. PGRS subfamily.

Its subcellular location is the secreted. It localises to the cell surface. It is found in the host cytoplasm. The protein localises to the host cytosol. Contributes to evasion of both innate and adaptive immunity. Inhibits autophagy in infected host phagocytes and inhibits major histocompatibility complex (MHC) class II antigen presentation by mycobacteria-infected dendritic cells. Has an important role in the growth and survival of M.tuberculosis, particularly during intracellular growth and in the later chronic phase of infection. In Mycobacterium tuberculosis (strain ATCC 25618 / H37Rv), this protein is PE-PGRS family protein PE_PGRS47.